Reading from the N-terminus, the 127-residue chain is Copper resistance protein C (127 aa).

The first 25 residues, 1–25 (MFAFRSIATTVVMVAASLASASAFA), serve as a signal peptide directing secretion. Cu cation contacts are provided by histidine 26, methionine 65, methionine 68, methionine 71, methionine 76, and histidine 116.

This sequence belongs to the CopC family.

Its subcellular location is the periplasm. Copper-binding protein involved in copper resistance. In Xanthomonas campestris pv. juglandis (Xanthomonas arboricola pv. juglandis), this protein is Copper resistance protein C.